Consider the following 345-residue polypeptide: NADH-ubiquinone oxidoreductase chain 2 (345 aa).

10 consecutive transmembrane segments (helical) span residues 1–21 (MNPI…ILTM), 25–45 (HWVS…PIIS), 59–79 (YFLI…TNAY), 96–116 (IMLS…FWLP), 123–143 (PMIT…ALLI), 148–168 (LIPP…GGLG), 191–211 (ITIT…YILL), 240–260 (TASL…LSGF), 274–294 (HLTP…MFYL), and 324–344 (SLLS…PLMI).

Belongs to the complex I subunit 2 family.

It is found in the mitochondrion inner membrane. The enzyme catalyses a ubiquinone + NADH + 5 H(+)(in) = a ubiquinol + NAD(+) + 4 H(+)(out). Its function is as follows. Core subunit of the mitochondrial membrane respiratory chain NADH dehydrogenase (Complex I) that is believed to belong to the minimal assembly required for catalysis. Complex I functions in the transfer of electrons from NADH to the respiratory chain. The immediate electron acceptor for the enzyme is believed to be ubiquinone. This is NADH-ubiquinone oxidoreductase chain 2 (MT-ND2) from Varanus timorensis (Timor monitor).